Reading from the N-terminus, the 100-residue chain is Urease subunit gamma (100 aa).

It belongs to the urease gamma subunit family. Heterotrimer of UreA (gamma), UreB (beta) and UreC (alpha) subunits. Three heterotrimers associate to form the active enzyme.

The protein localises to the cytoplasm. It carries out the reaction urea + 2 H2O + H(+) = hydrogencarbonate + 2 NH4(+). It participates in nitrogen metabolism; urea degradation; CO(2) and NH(3) from urea (urease route): step 1/1. The sequence is that of Urease subunit gamma from Paenarthrobacter aurescens (strain TC1).